The primary structure comprises 432 residues: Adenylosuccinate synthetase (432 aa).

GTP contacts are provided by residues 12-18 (GDEGKGK) and 40-42 (GHT). The Proton acceptor role is filled by Asp13. Residues Asp13 and Gly40 each contribute to the Mg(2+) site. Residues 13 to 16 (DEGK), 38 to 41 (NAGH), Thr129, Arg143, Gln224, Thr239, and Arg303 each bind IMP. Residue His41 is the Proton donor of the active site. 299–305 (VTTGRRR) contributes to the substrate binding site. GTP is bound by residues Arg305, 331-333 (KLD), and 413-415 (GVG).

The protein belongs to the adenylosuccinate synthetase family. Homodimer. Requires Mg(2+) as cofactor.

The protein resides in the cytoplasm. The enzyme catalyses IMP + L-aspartate + GTP = N(6)-(1,2-dicarboxyethyl)-AMP + GDP + phosphate + 2 H(+). It participates in purine metabolism; AMP biosynthesis via de novo pathway; AMP from IMP: step 1/2. Functionally, plays an important role in the de novo pathway of purine nucleotide biosynthesis. Catalyzes the first committed step in the biosynthesis of AMP from IMP. The protein is Adenylosuccinate synthetase of Mycobacterium leprae (strain TN).